A 129-amino-acid polypeptide reads, in one-letter code: Glycoprotein hormone alpha-2 (129 aa).

The N-terminal stretch at 1–23 (MPMASPQTLVLYLLVLAVTEAWG) is a signal peptide. 4 disulfides stabilise this stretch: Cys31–Cys89, Cys48–Cys103, Cys57–Cys119, and Cys61–Cys121. N-linked (GlcNAc...) asparagine glycans are attached at residues Asn37 and Asn81.

It belongs to the glycoprotein hormones subunit alpha family. As to quaternary structure, heterodimer with GPHB5; this heterodimer interacts with thyroid-stimulating hormone receptor (TSHR), and hence stimulates cAMP production. Post-translationally, glycosylated. Found in a variety of tissues.

The protein resides in the secreted. Functions as a heterodimeric glycoprotein hormone with GPHB5 able to bind and activate the thyroid-stimulating hormone receptor (TSHR), leading to increased cAMP production. Plays a central role in controlling thyroid cell metabolism. The protein is Glycoprotein hormone alpha-2 (GPHA2) of Homo sapiens (Human).